Here is a 114-residue protein sequence, read N- to C-terminus: Reprimo-like protein (114 aa).

Residues Val-61 to Leu-81 traverse the membrane as a helical segment.

This sequence belongs to the reprimo family.

The protein localises to the membrane. In Danio rerio (Zebrafish), this protein is Reprimo-like protein (rprml).